A 259-amino-acid chain; its full sequence is uncharacterized protein (259 aa).

The N-terminal stretch at 1–22 is a signal peptide; the sequence is MKHSSKIIVFVSFLILTIFIGG. Cys23 carries N-palmitoyl cysteine lipidation. Cys23 is lipidated: S-diacylglycerol cysteine.

The protein belongs to the staphylococcal tandem lipoprotein family.

Its subcellular location is the cell membrane. This is an uncharacterized protein from Staphylococcus epidermidis (strain ATCC 35984 / DSM 28319 / BCRC 17069 / CCUG 31568 / BM 3577 / RP62A).